The following is a 552-amino-acid chain: Hydroxylamine reductase (552 aa).

[2Fe-2S] cluster is bound by residues C5, C8, C20, and C27. Residues H251, E275, C319, C407, C435, C460, E494, and K496 each contribute to the hybrid [4Fe-2O-2S] cluster site. Residue C407 is modified to Cysteine persulfide.

The protein belongs to the HCP family. [2Fe-2S] cluster is required as a cofactor. The cofactor is hybrid [4Fe-2O-2S] cluster.

Its subcellular location is the cytoplasm. The catalysed reaction is A + NH4(+) + H2O = hydroxylamine + AH2 + H(+). Catalyzes the reduction of hydroxylamine to form NH(3) and H(2)O. The sequence is that of Hydroxylamine reductase from Shigella flexneri.